A 125-amino-acid polypeptide reads, in one-letter code: Cytochrome c2 (125 aa).

An N-terminal signal peptide occupies residues 1–21 (MKAIKIAMVGAALVWSASAYA). Residues 23-123 (GDPVKGEQVF…DVIAFLATQH (101 aa)) form the Cytochrome c domain. 4 residues coordinate heme c: Cys-35, Cys-38, His-39, and Met-101.

It belongs to the cytochrome c family. Binds 1 heme c group covalently per subunit.

In terms of biological role, cytochrome c2 is found mainly in purple, non-sulfur, photosynthetic bacteria where it functions as the electron donor to the oxidized bacteriochlorophyll in the photophosphorylation pathway. However, it may also have a role in the respiratory chain and is found in some non-photosynthetic bacteria. This is Cytochrome c2 from Rhodomicrobium vannielii (strain ATCC 17100 / DSM 162 / LMG 4299 / NCIMB 10020 / ATH 3.1.1).